A 488-amino-acid polypeptide reads, in one-letter code: Probable glycine dehydrogenase (decarboxylating) subunit 2 (488 aa).

At K274 the chain carries N6-(pyridoxal phosphate)lysine.

The protein belongs to the GcvP family. C-terminal subunit subfamily. The glycine cleavage system is composed of four proteins: P, T, L and H. In this organism, the P 'protein' is a heterodimer of two subunits. It depends on pyridoxal 5'-phosphate as a cofactor.

The enzyme catalyses N(6)-[(R)-lipoyl]-L-lysyl-[glycine-cleavage complex H protein] + glycine + H(+) = N(6)-[(R)-S(8)-aminomethyldihydrolipoyl]-L-lysyl-[glycine-cleavage complex H protein] + CO2. Its function is as follows. The glycine cleavage system catalyzes the degradation of glycine. The P protein binds the alpha-amino group of glycine through its pyridoxal phosphate cofactor; CO(2) is released and the remaining methylamine moiety is then transferred to the lipoamide cofactor of the H protein. The sequence is that of Probable glycine dehydrogenase (decarboxylating) subunit 2 from Listeria monocytogenes serovar 1/2a (strain ATCC BAA-679 / EGD-e).